The following is a 147-amino-acid chain: Hemoglobin subunit gamma-1 (147 aa).

Residue Gly2 is modified to N-acetylglycine. In terms of domain architecture, Globin spans 3–147 (HFTEEDKATI…VASALSSRYH (145 aa)). Thr13 is modified (phosphothreonine). Phosphoserine is present on residues Ser45, Ser51, and Ser53. Lys60 is modified (N6-acetyllysine). Position 64 (His64) interacts with heme b. Lys83 carries the post-translational modification N6-acetyllysine. Residue His93 coordinates heme b. Cys94 carries the S-nitrosocysteine modification. Ser140 carries the post-translational modification Phosphoserine.

This sequence belongs to the globin family. As to quaternary structure, heterotetramer of two alpha chains and two gamma chains in fetal hemoglobin (Hb F). As to expression, red blood cells.

Functionally, gamma chains make up the fetal hemoglobin F, in combination with alpha chains. The chain is Hemoglobin subunit gamma-1 (HBG1) from Pongo pygmaeus (Bornean orangutan).